A 211-amino-acid polypeptide reads, in one-letter code: Porin MspA (211 aa).

Positions 1–27 (MKAISRVLIAMVAAIAALFTSTGTSHA) are cleaved as a signal peptide.

It belongs to the mycobacterial porin (TC 1.B.24) family. As to quaternary structure, forms very stable octamers. Isolated as a 100 kDa complex that can be reduced to monomers upon boiling in 80% dimethyl sulfoxide for 15 minutes. Structures show a goblet with the wide end on the exterior of the outer membrane and a central channel. It is not known if mixed oligomers of MspA with other Msp subunits form in vivo.

The protein localises to the cell outer membrane. It localises to the secreted. Its subcellular location is the cell wall. In terms of biological role, the major porin in this organism, forms a water-filled channel which favors the permeation of cations, amino acids, iron Fe(3+) and less efficiently phosphate. Does not transport Fe-ExoMS, the predominant siderophore. Plays a role in transport of beta-lactamase and hydrophilic fluoroquinolone antibiotics such as norfloxacin as well as chloramphenicol. There are about 2400 porins in wild-type, 800 in an mspA deletion and 150 in a double mspA-mspC deletion. Different conductance values with maxima at 2.3 and 4.6 nanosiemens might be caused by a simultaneous reconstitution of MspA channels into the membrane or by the existence of different MspA conformations. The polypeptide is Porin MspA (mspA) (Mycolicibacterium smegmatis (strain ATCC 700084 / mc(2)155) (Mycobacterium smegmatis)).